A 675-amino-acid polypeptide reads, in one-letter code: G-protein-signaling modulator 1 (675 aa).

The interval methionine 1–arginine 509 is mediates association with membranes. TPR repeat units follow at residues cysteine 28–aspartate 61, serine 66–isoleucine 99, alanine 106–glutamine 139, alanine 146–valine 181, glutamate 183–leucine 202, glycine 209–phenylalanine 242, arginine 249–leucine 282, alanine 289–leucine 322, and glycine 329–isoleucine 362. Residues aspartate 364–isoleucine 487 form an interaction with STK11/LKB1 region. A disordered region spans residues serine 391 to leucine 412. The residue at position 413 (serine 413) is a Phosphoserine. An Omega-N-methylarginine modification is found at arginine 421. Residues leucine 424–serine 442 are compositionally biased toward basic and acidic residues. Positions leucine 424 to serine 492 are disordered. A phosphoserine mark is found at serine 445, serine 469, serine 471, serine 492, and serine 493. Positions lysine 454 to serine 469 are enriched in basic and acidic residues. In terms of domain architecture, GoLoco 1 spans glutamate 495–leucine 517. Phosphoserine is present on residues serine 545 and serine 569. 3 GoLoco domains span residues threonine 548–valine 570, glycine 596–proline 618, and aspartate 630–leucine 652. Disordered regions lie at residues arginine 610–aspartate 630 and arginine 644–serine 675.

It belongs to the GPSM family. In terms of assembly, interacts with GNAI1, GNAI2 and GNAI3 preferentially in their GDP-bound state. May also interact with GNAO1. Interacts with STK11/LKB1 and MACF1. Interacts with INSC/inscuteable and FRMPD1. Post-translationally, phosphorylation regulates interaction with G(i/o) alpha. In terms of tissue distribution, expressed in intestinal cells.

Its subcellular location is the cytoplasm. It localises to the cytosol. It is found in the endoplasmic reticulum membrane. The protein localises to the golgi apparatus membrane. The protein resides in the cell membrane. Guanine nucleotide dissociation inhibitor (GDI) which functions as a receptor-independent activator of heterotrimeric G-protein signaling. Keeps G(i/o) alpha subunit in its GDP-bound form thus uncoupling heterotrimeric G-proteins signaling from G protein-coupled receptors. Controls spindle orientation and asymmetric cell fate of cerebral cortical progenitors. May also be involved in macroautophagy in intestinal cells. May play a role in drug addiction. This chain is G-protein-signaling modulator 1 (GPSM1), found in Homo sapiens (Human).